Here is a 65-residue protein sequence, read N- to C-terminus: Hirudin-2 (65 aa).

The interval 1-3 is interaction with thrombin active site; sequence ITY. 3 disulfide bridges follow: cysteine 6/cysteine 14, cysteine 16/cysteine 28, and cysteine 22/cysteine 39. The tract at residues 39–65 is disordered; it reads CVTGEGTPKPQSHNDGDFEEIPEEYLQ. Threonine 45 is a glycosylation site (O-linked (GalNAc...) threonine). Residues 55 to 65 form an interaction with fibrinogen-binding exosite of thrombin region; the sequence is DFEEIPEEYLQ. Positions 55-65 are enriched in acidic residues; that stretch reads DFEEIPEEYLQ. The residue at position 63 (tyrosine 63) is a Sulfotyrosine.

Belongs to the protease inhibitor I14 (hirudin) family.

The protein localises to the secreted. Functionally, hirudin is a potent thrombin-specific protease inhibitor. It forms a stable non-covalent complex with alpha-thrombin, thereby abolishing its ability to cleave fibrinogen. In Hirudo medicinalis (Medicinal leech), this protein is Hirudin-2.